A 717-amino-acid polypeptide reads, in one-letter code: MPSFLLEVGTEELPANFVDEAIAQWQSRIPSSLEEQQLTPEGIEFYGTPRRLAVLIKGLPAKQSDRIEEVKGPAANVAFKSGKPTKALEGFVRKQGVTPDEVEIRDTDKGEFVFVQKNITGRNTTEILQELVPQWITQLEGRRFMRWGDGDLRFPRPIRWLVTLWDQDILPLELVNGATQVKSDRLTYGHRILAPESVSIPEASAYQKSLQQAYVEVSPLQRRQTIEQQIEKVAKQLKGVAVIPPDLLDEVVNLVEYPSAVAGNFEPDFLNLPTEVITTVMVTHQRYFPVKATGKTNKNNTLLPYFITISNGDPNKGEIIAAGNERVIRARLADAQFFYKADCDEPLESYLPQLETVTFQEQLGTIRDKVDRIMEISQLIADQLDLDSGERSEIESTAMLCKADLVTQMVYEFPELQGVMGQKYALASGESPNVALGIFEHYLPRGADDIMPESLTGQVVGLADRIDTIVSIFGLGMIPTGSGDPFALRRAATGIIKVTWYAELPIDILDLLEQSSQDFVTAHPDKTSPIESLKSFFIQRLSTLLQDDLHIDYDLVNAVLGENDPEYTERALRDLLDVRDRAQFLQSIRNNQKIDEIYETVNRSARLAVKGELDTQELDPEKVIRPALFEKSSEEHFYKVLIDLVPTTLTAQRERNYQLLVDALGKIAPTVSNFFDGEDSVLVMDENLEVRENRLNLLGLLRNHARVLADFGAIVKS.

The protein belongs to the class-II aminoacyl-tRNA synthetase family. In terms of assembly, tetramer of two alpha and two beta subunits.

The protein localises to the cytoplasm. The catalysed reaction is tRNA(Gly) + glycine + ATP = glycyl-tRNA(Gly) + AMP + diphosphate. This is Glycine--tRNA ligase beta subunit from Gloeothece citriformis (strain PCC 7424) (Cyanothece sp. (strain PCC 7424)).